The primary structure comprises 405 residues: ATP phosphoribosyltransferase regulatory subunit (405 aa).

Belongs to the class-II aminoacyl-tRNA synthetase family. HisZ subfamily. Heteromultimer composed of HisG and HisZ subunits.

It localises to the cytoplasm. Its pathway is amino-acid biosynthesis; L-histidine biosynthesis; L-histidine from 5-phospho-alpha-D-ribose 1-diphosphate: step 1/9. Functionally, required for the first step of histidine biosynthesis. May allow the feedback regulation of ATP phosphoribosyltransferase activity by histidine. In Microcystis aeruginosa (strain NIES-843 / IAM M-2473), this protein is ATP phosphoribosyltransferase regulatory subunit.